A 678-amino-acid chain; its full sequence is Beta-catenin-like protein hmp-2 (678 aa).

ARM repeat units follow at residues 153–192, 280–319, 320–359, 362–403, and 409–448; these read RGGP…NLLM, PSNK…RNLS, DSAT…NLTC, TRNK…HCTA, and EEAQ…NSAL.

The protein belongs to the beta-catenin family. As to quaternary structure, component of a core catenin-cadherin complex consisting of hmr-1, hmp-1 and hmp-2; the complex localizes to adherens junctions. Interacts with hmr-1; the interaction is direct. May interact with hmp-1. Interacts with frk-1. In terms of tissue distribution, epidermal cells.

The protein resides in the cell junction. It localises to the adherens junction. In terms of biological role, required for cell migration during body enclosure and cell shape changes during body elongation. Plays a role in recruitment of the cadherin protein hmr-1 to adherens junctions. The chain is Beta-catenin-like protein hmp-2 (hmp-2) from Caenorhabditis elegans.